The following is a 245-amino-acid chain: MSHFKSAEEAAAAGKYVRTVRSFVKREGRLTKGQAAAIERLWPTVGLTLENGRLDLAMVFGREAPVTLEIGFGMGHSLVEMAANAPERDFIGIEVHEPGVGACLMAAEEAGVENFRVFHEDAVEVLKQCIPDNSLNCVQIFFPDPWHKKRHHKRRIVQPEFVKLLIQKIETGGVIHLATDWENYAEHMLEVLNDEPRLTNLSSSGDYVPRPENRPKTKFERRGEGKGHGVWDLQFKTNKSATLLG.

Residues Glu-69, Glu-94, Asp-121, and Asp-144 each coordinate S-adenosyl-L-methionine. Asp-144 is a catalytic residue. Residues Lys-148, Asp-180, and 217–220 (TKFE) each bind substrate. Residues 200–225 (NLSSSGDYVPRPENRPKTKFERRGEG) are disordered. Basic and acidic residues predominate over residues 209–225 (PRPENRPKTKFERRGEG).

This sequence belongs to the class I-like SAM-binding methyltransferase superfamily. TrmB family.

It catalyses the reaction guanosine(46) in tRNA + S-adenosyl-L-methionine = N(7)-methylguanosine(46) in tRNA + S-adenosyl-L-homocysteine. It functions in the pathway tRNA modification; N(7)-methylguanine-tRNA biosynthesis. In terms of biological role, catalyzes the formation of N(7)-methylguanine at position 46 (m7G46) in tRNA. The polypeptide is tRNA (guanine-N(7)-)-methyltransferase (Idiomarina loihiensis (strain ATCC BAA-735 / DSM 15497 / L2-TR)).